The following is a 398-amino-acid chain: Tryptophan synthase beta chain (398 aa).

Lys88 bears the N6-(pyridoxal phosphate)lysine mark.

The protein belongs to the TrpB family. As to quaternary structure, tetramer of two alpha and two beta chains. It depends on pyridoxal 5'-phosphate as a cofactor.

It catalyses the reaction (1S,2R)-1-C-(indol-3-yl)glycerol 3-phosphate + L-serine = D-glyceraldehyde 3-phosphate + L-tryptophan + H2O. It participates in amino-acid biosynthesis; L-tryptophan biosynthesis; L-tryptophan from chorismate: step 5/5. The beta subunit is responsible for the synthesis of L-tryptophan from indole and L-serine. This chain is Tryptophan synthase beta chain, found in Mannheimia succiniciproducens (strain KCTC 0769BP / MBEL55E).